The following is a 431-amino-acid chain: Enolase (431 aa).

Glutamine 167 is a binding site for (2R)-2-phosphoglycerate. Residue glutamate 209 is the Proton donor of the active site. 3 residues coordinate Mg(2+): aspartate 246, glutamate 289, and aspartate 316. Residues lysine 341, arginine 370, serine 371, and lysine 392 each coordinate (2R)-2-phosphoglycerate. The Proton acceptor role is filled by lysine 341.

It belongs to the enolase family. As to quaternary structure, component of the RNA degradosome, a multiprotein complex involved in RNA processing and mRNA degradation. Mg(2+) serves as cofactor.

The protein localises to the cytoplasm. It is found in the secreted. The protein resides in the cell surface. The catalysed reaction is (2R)-2-phosphoglycerate = phosphoenolpyruvate + H2O. It participates in carbohydrate degradation; glycolysis; pyruvate from D-glyceraldehyde 3-phosphate: step 4/5. Its function is as follows. Catalyzes the reversible conversion of 2-phosphoglycerate (2-PG) into phosphoenolpyruvate (PEP). It is essential for the degradation of carbohydrates via glycolysis. This Shewanella woodyi (strain ATCC 51908 / MS32) protein is Enolase.